The sequence spans 394 residues: Elongation factor Tu 1 (394 aa).

The tr-type G domain occupies 10–204; it reads KPHVNVGTIG…ALDSYIPQPE (195 aa). A G1 region spans residues 19–26; sequence GHVDHGKT. 19–26 lines the GTP pocket; the sequence is GHVDHGKT. Threonine 26 contacts Mg(2+). The G2 stretch occupies residues 60–64; the sequence is GITIN. Residues 81-84 are G3; the sequence is DCPG. GTP contacts are provided by residues 81 to 85 and 136 to 139; these read DCPGH and NKCD. Residues 136–139 form a G4 region; the sequence is NKCD. Positions 174–176 are G5; sequence SAL.

It belongs to the TRAFAC class translation factor GTPase superfamily. Classic translation factor GTPase family. EF-Tu/EF-1A subfamily. Monomer.

Its subcellular location is the cytoplasm. It catalyses the reaction GTP + H2O = GDP + phosphate + H(+). Its function is as follows. GTP hydrolase that promotes the GTP-dependent binding of aminoacyl-tRNA to the A-site of ribosomes during protein biosynthesis. This is Elongation factor Tu 1 from Yersinia pestis bv. Antiqua (strain Nepal516).